The sequence spans 347 residues: MDSFFSTYVLPAIIMIGQSLLLLVCLLVFIAYVLLADRKIWAAVQLRRGPNVVGPFGLFQSFADLLKFVFKEPIIPAGANKAVFLLAPLVTVLLALSTWAVVPLADGWVIANINVGILYIFAISSLEVYGIIMGGWASNSKYPFLGALRSAAQMVSYEVSIGFVIVTVLLCVGSLNLTDIVNAQHTGLGTMLGLPASFLDWHWLSLFPMFIIFFISALAETNRPPFDLPEAESELVAGFMVEYGSSPYMMFMLGEYAAVCLMCSLTTILFLGGWLPPVDIWILNWVPGIIWFMLKACFVFFMFAMVKAFVPRYRYDQLMRLGWKVFLPLSLAMVIIVAFVLKLMGWA.

The next 9 helical transmembrane spans lie at 13-33, 50-70, 82-102, 115-135, 161-181, 198-218, 263-283, 286-306, and 321-341; these read IIMIGQSLLLLVCLLVFIAYV, PNVVGPFGLFQSFADLLKFVF, AVFLLAPLVTVLLALSTWAVV, VGILYIFAISSLEVYGIIMGG, IGFVIVTVLLCVGSLNLTDIV, FLDWHWLSLFPMFIIFFISAL, CSLTTILFLGGWLPPVDIWIL, VPGIIWFMLKACFVFFMFAMV, and LGWKVFLPLSLAMVIIVAFVL.

The protein belongs to the complex I subunit 1 family. In terms of assembly, NDH-1 is composed of 14 different subunits. Subunits NuoA, H, J, K, L, M, N constitute the membrane sector of the complex.

The protein localises to the cell inner membrane. It carries out the reaction a quinone + NADH + 5 H(+)(in) = a quinol + NAD(+) + 4 H(+)(out). Its function is as follows. NDH-1 shuttles electrons from NADH, via FMN and iron-sulfur (Fe-S) centers, to quinones in the respiratory chain. The immediate electron acceptor for the enzyme in this species is believed to be ubiquinone. Couples the redox reaction to proton translocation (for every two electrons transferred, four hydrogen ions are translocated across the cytoplasmic membrane), and thus conserves the redox energy in a proton gradient. This subunit may bind ubiquinone. The chain is NADH-quinone oxidoreductase subunit H from Rhizobium leguminosarum bv. trifolii (strain WSM2304).